Consider the following 221-residue polypeptide: uncharacterized protein (221 aa).

Transmembrane regions (helical) follow at residues 41–63 (TGNIRIGLIVLSLIGSYILHSLI), 78–100 (AVMYTISILLIIGLWTNVFSSLS), 141–163 (ILAYDLPNVLVFGCTSLFVISFL), and 178–200 (LILRSFIILILVISTILFLVNLF).

The protein localises to the cell membrane. This is an uncharacterized protein from Archaeoglobus fulgidus (strain ATCC 49558 / DSM 4304 / JCM 9628 / NBRC 100126 / VC-16).